We begin with the raw amino-acid sequence, 273 residues long: Neuferricin (273 aa).

Residues M1–H22 form the signal peptide. One can recognise a Cytochrome b5 heme-binding domain in the interval G44–T143.

Belongs to the cytochrome b5 family. MAPR subfamily.

It is found in the secreted. In terms of biological role, heme-binding protein which promotes neuronal but not astrocyte differentiation. This is Neuferricin (cyb5d2) from Xenopus tropicalis (Western clawed frog).